Reading from the N-terminus, the 418-residue chain is Tyrosine--tRNA ligase (418 aa).

Tyr-38 is an L-tyrosine binding site. Positions 43–52 (CTAKSLHVGS) match the 'HIGH' region motif. 2 residues coordinate L-tyrosine: Tyr-175 and Gln-179. Positions 235–239 (KMGKT) match the 'KMSKS' region motif. Lys-238 is an ATP binding site. One can recognise an S4 RNA-binding domain in the interval 348–413 (LPIIKLLQMC…CGKKRHLKVM (66 aa)).

Belongs to the class-I aminoacyl-tRNA synthetase family. TyrS type 1 subfamily. Homodimer.

The protein resides in the cytoplasm. The enzyme catalyses tRNA(Tyr) + L-tyrosine + ATP = L-tyrosyl-tRNA(Tyr) + AMP + diphosphate + H(+). Catalyzes the attachment of tyrosine to tRNA(Tyr) in a two-step reaction: tyrosine is first activated by ATP to form Tyr-AMP and then transferred to the acceptor end of tRNA(Tyr). The sequence is that of Tyrosine--tRNA ligase from Ehrlichia chaffeensis (strain ATCC CRL-10679 / Arkansas).